We begin with the raw amino-acid sequence, 258 residues long: MAVISMKQLLEAGVHFGHQTRRWNPKMAKYIFTERNGIHVIDLQQTVKLADQAYEFIRDAAANEAVILFVGTKKQAAEAVKDEAIRAGQYFINHRWLGGTLTNWGTIQKRIARLKEINRMEEDGTFEVLPKKEVALLNKQRARLEKFLGGIADMPRIPDVMFVVDPHKEQIAVKEAKKLGIPVVAMVDTNTDPDDIDVIIPANDDAIRAVKLITAKMADAIIEGNQGEDSVAAVEAELAAEPASTESIEELVEVVEGK.

It belongs to the universal ribosomal protein uS2 family.

The sequence is that of Small ribosomal subunit protein uS2 from Streptococcus suis (strain 05ZYH33).